The chain runs to 520 residues: Cyclin-L2 (520 aa).

At Ala-2 the chain carries N-acetylalanine. Cyclin-like stretches follow at residues 83–185 and 198–282; these read ELIQ…RVLK and KIIV…KILQ. The interval 316–520 is disordered; it reads LPGGTQVLDG…DHPGHSRHRR (205 aa). Ser-330, Ser-338, Ser-348, and Ser-351 each carry phosphoserine. Residues 357–367 show a composition bias toward basic and acidic residues; the sequence is RRLEGAKKAKA. Phosphoserine is present on Ser-369. Over residues 376 to 390 the composition is skewed to basic and acidic residues; sequence KGRESRSRSRSREQS. Positions 385–423 are RS; sequence RSREQSYSRSPSRSASPKRRKSDSGSTSGGSKSQSRSRS. A compositionally biased stretch (low complexity) spans 408–436; that stretch reads SGSTSGGSKSQSRSRSRSDSPPRQAPRSA. A compositionally biased stretch (basic and acidic residues) spans 441–454; sequence SEIRGSRKSKDCKY. The span at 456-471 shows a compositional bias: basic residues; it reads QKPHKSRSRSSSRSRS. Composition is skewed to basic and acidic residues over residues 472–481 and 489–514; these read RSRERADNPG and YYRD…DHPG.

It belongs to the cyclin family. Cyclin L subfamily. As to quaternary structure, interacts with CDK11A, CDK11B, CDK12, CDK13 and POLR2A, the hyperphosphorylated C-terminal domain (CTD) of RNA polymerase II. May form a ternary complex with CDK11B and casein kinase II (CKII). Interacts with pre-mRNA-splicing factors, including at least SRSF1, SRSF2 AND SRSF7/SLU7. Widely expressed.

Its subcellular location is the nucleus speckle. It is found in the nucleus. The protein resides in the nucleoplasm. Involved in pre-mRNA splicing. May induce cell death, possibly by acting on the transcription and RNA processing of apoptosis-related factors. In Homo sapiens (Human), this protein is Cyclin-L2 (CCNL2).